The following is a 98-amino-acid chain: Integration host factor subunit beta (98 aa).

It belongs to the bacterial histone-like protein family. Heterodimer of an alpha and a beta chain.

Its function is as follows. This protein is one of the two subunits of integration host factor, a specific DNA-binding protein that functions in genetic recombination as well as in transcriptional and translational control. This Pseudomonas entomophila (strain L48) protein is Integration host factor subunit beta.